The following is a 104-amino-acid chain: Precursor of CEP11 (104 aa).

The signal sequence occupies residues 1 to 27; it reads MAKTRRVIYLFLTIVLLFCELIDEAQG. Positions 28 to 85 are excised as a propeptide; the sequence is SRFRCHHSEDYSCKKRSSHHHHHHHHHQQQQHHHKDTPPEELQGSIKTRRSKDIYGLN. The disordered stretch occupies residues 37–104; the sequence is DYSCKKRSSH…SPGVGHLIKT (68 aa). The segment covering 41-62 has biased composition (basic residues); that stretch reads KKRSSHHHHHHHHHQQQQHHHK. Hydroxyproline is present on residues Pro92 and Pro96. Positions 101-104 are excised as a propeptide; the sequence is LIKT.

This sequence belongs to the C-terminally encoded plant signaling peptide (CEP) family. In terms of assembly, interacts with CEP receptors (e.g. CEPR1 and CEPR2). In terms of processing, the mature small signaling peptide is generated by proteolytic processing of the longer precursor. As to expression, expressed in lateral root primordia and in lateral roots excluding the meristem region.

The protein localises to the secreted. The protein resides in the extracellular space. It is found in the apoplast. In terms of biological role, extracellular signaling peptide that may regulate primary root growth rate and systemic nitrogen (N)-demand signaling. Mediates up-regulation of genes involved in N uptake and assimilation pathways. The chain is Precursor of CEP11 from Arabidopsis thaliana (Mouse-ear cress).